A 409-amino-acid chain; its full sequence is Pentatricopeptide repeat-containing protein At1g31790 (409 aa).

PPR repeat units lie at residues 87–121 (NEDIYSCLAKESARENDQRGAHELQVHIMKSSIRP), 122–152 (TITFINRLLLMHVSCGRLDITRQMFDRMPHR), 153–187 (DFHSWAIVFLGCIEMGDYEDAAFLFVSMLKHSQKG), 192–226 (PSWILGCVLKACAMIRDFELGKQVHALCHKLGFID), 229–259 (DSYLSGSLIRFYGEFRCLEDANLVLHQLSNA), 260–294 (NTVAWAAKVTNDYREGEFQEVIRDFIEMGNHGIKK), 295–330 (NVSVFSNVLKACSWVSDGGRSGQQVHANAIKLGFES), 331–361 (DCLIRCRLIEMYGKYGKVKDAEKVFKSSKDE), and 363–397 (SVSCWNAMVASYMQNGIYIEAIKLLYQMKATGIKA).

Belongs to the PPR family. PCMP-A subfamily.

The polypeptide is Pentatricopeptide repeat-containing protein At1g31790 (PCMP-A1) (Arabidopsis thaliana (Mouse-ear cress)).